Reading from the N-terminus, the 354-residue chain is GTPase Obg (354 aa).

The region spanning 1–159 (MKFLDQCKIY…LWVWLRLKLI (159 aa)) is the Obg domain. An OBG-type G domain is found at 160–328 (ADVGLVGLPN…LLRAAFTQVR (169 aa)). Residues 166–173 (GLPNAGKS), 191–195 (FTTLT), 213–216 (DIPG), 280–283 (NKVD), and 309–311 (SGV) each bind GTP. Positions 173 and 193 each coordinate Mg(2+). The segment at 333–354 (ETPAEAAIDEAPEEETPGGWQP) is disordered. Acidic residues predominate over residues 339–348 (AIDEAPEEET).

Belongs to the TRAFAC class OBG-HflX-like GTPase superfamily. OBG GTPase family. In terms of assembly, monomer. Requires Mg(2+) as cofactor.

It localises to the cytoplasm. An essential GTPase which binds GTP, GDP and possibly (p)ppGpp with moderate affinity, with high nucleotide exchange rates and a fairly low GTP hydrolysis rate. Plays a role in control of the cell cycle, stress response, ribosome biogenesis and in those bacteria that undergo differentiation, in morphogenesis control. This chain is GTPase Obg, found in Caulobacter sp. (strain K31).